The chain runs to 943 residues: Isoleucine--tRNA ligase (943 aa).

A 'HIGH' region motif is present at residues 59–69; it reads PYANGRIHLGH. Glu577 is an L-isoleucyl-5'-AMP binding site. The 'KMSKS' region motif lies at 618 to 622; that stretch reads KMSKS. Lys621 is a binding site for ATP. Cys906, Cys909, Cys926, and Cys929 together coordinate Zn(2+).

This sequence belongs to the class-I aminoacyl-tRNA synthetase family. IleS type 1 subfamily. Monomer. The cofactor is Zn(2+).

The protein localises to the cytoplasm. The catalysed reaction is tRNA(Ile) + L-isoleucine + ATP = L-isoleucyl-tRNA(Ile) + AMP + diphosphate. Catalyzes the attachment of isoleucine to tRNA(Ile). As IleRS can inadvertently accommodate and process structurally similar amino acids such as valine, to avoid such errors it has two additional distinct tRNA(Ile)-dependent editing activities. One activity is designated as 'pretransfer' editing and involves the hydrolysis of activated Val-AMP. The other activity is designated 'posttransfer' editing and involves deacylation of mischarged Val-tRNA(Ile). The sequence is that of Isoleucine--tRNA ligase from Stenotrophomonas maltophilia (strain K279a).